A 541-amino-acid polypeptide reads, in one-letter code: Chaperonin GroEL 2 (541 aa).

Residues 29–32, 86–90, Gly413, 476–478, and Asp492 each bind ATP; these read TLGP, DGTTT, and NAA.

It belongs to the chaperonin (HSP60) family. As to quaternary structure, forms a cylinder of 14 subunits composed of two heptameric rings stacked back-to-back. Interacts with the co-chaperonin GroES.

It localises to the secreted. The protein resides in the capsule. Its subcellular location is the cell surface. It is found in the cell wall. It carries out the reaction ATP + H2O + a folded polypeptide = ADP + phosphate + an unfolded polypeptide.. In terms of biological role, together with its co-chaperonin GroES, plays an essential role in assisting protein folding. The GroEL-GroES system forms a nano-cage that allows encapsulation of the non-native substrate proteins and provides a physical environment optimized to promote and accelerate protein folding. This is Chaperonin GroEL 2 from Mycobacterium ulcerans (strain Agy99).